A 200-amino-acid chain; its full sequence is Large ribosomal subunit protein uL4 (200 aa).

The disordered stretch occupies residues 43-70 (RAQKTRAEVSGSGKKPWRQKGTGRARSG).

The protein belongs to the universal ribosomal protein uL4 family. Part of the 50S ribosomal subunit.

Its function is as follows. One of the primary rRNA binding proteins, this protein initially binds near the 5'-end of the 23S rRNA. It is important during the early stages of 50S assembly. It makes multiple contacts with different domains of the 23S rRNA in the assembled 50S subunit and ribosome. In terms of biological role, forms part of the polypeptide exit tunnel. In Glaesserella parasuis serovar 5 (strain SH0165) (Haemophilus parasuis), this protein is Large ribosomal subunit protein uL4.